Here is a 110-residue protein sequence, read N- to C-terminus: Large ribosomal subunit protein uL22 (110 aa).

This sequence belongs to the universal ribosomal protein uL22 family. As to quaternary structure, part of the 50S ribosomal subunit.

Its function is as follows. This protein binds specifically to 23S rRNA; its binding is stimulated by other ribosomal proteins, e.g. L4, L17, and L20. It is important during the early stages of 50S assembly. It makes multiple contacts with different domains of the 23S rRNA in the assembled 50S subunit and ribosome. Functionally, the globular domain of the protein is located near the polypeptide exit tunnel on the outside of the subunit, while an extended beta-hairpin is found that lines the wall of the exit tunnel in the center of the 70S ribosome. The chain is Large ribosomal subunit protein uL22 from Ruthia magnifica subsp. Calyptogena magnifica.